A 120-amino-acid polypeptide reads, in one-letter code: Immunoglobulin kappa variable 2-112 (120 aa).

A signal peptide spans 1–20 (MRCSLQFLGVLMFWISGVSG). Residues 21 to 43 (DIVITQDELSNPVTSGESVSISC) are framework-1. C43 and C113 are joined by a disulfide. Positions 44-59 (RSSKSLLYKDGKTYLN) are complementarity-determining-1. The segment at 60–74 (WFLQRPGQSPQLLIY) is framework-2. The segment at 75–81 (LMSTRAS) is complementarity-determining-2. The tract at residues 82 to 113 (GVSDRFSGSGSGTDFTLEISRVKAEDVGVYYC) is framework-3. A complementarity-determining-3 region spans residues 114 to 120 (QQLVEYP).

This Mus musculus (Mouse) protein is Immunoglobulin kappa variable 2-112.